Reading from the N-terminus, the 336-residue chain is Vacuolar protein sorting-associated protein 26B (336 aa).

3 positions are modified to phosphoserine: Ser-302, Ser-304, and Ser-319.

It belongs to the VPS26 family. In terms of assembly, component of the heterotrimeric retromer cargo-selective complex (CSC), also described as vacuolar protein sorting subcomplex (VPS), formed by VPS26 (VPS26A or VPS26B), VPS29 and VPS35. The CSC has a highly elongated structure with VPS26 and VPS29 binding independently at opposite distal ends of VPS35 as central platform. The CSC is believed to associate with variable sorting nexins to form functionally distinct retromer complex variants. The originally described SNX-BAR retromer is a pentamer containing the CSC and a heterodimeric membrane-deforming subcomplex formed between SNX1 or SNX2 and SNX5 or SNX6 (also called SNX-BAR subcomplex); the respective CSC and SNX-BAR subcomplexes associate with low affinity. The CSC associates with SNX3 to form a SNX3-retromer complex. The CSC associates with SNX27, the WASH complex and the SNX-BAR subcomplex to form the SNX27-retromer complex. Interacts with VPS29, VPS35, TBC1D5, GOLPH3, SNX27. In terms of tissue distribution, ubiquitously expressed in developing embryo and adult. Highly expressed in brain.

It is found in the cytoplasm. It localises to the membrane. The protein localises to the early endosome. Its subcellular location is the late endosome. Acts as a component of the retromer cargo-selective complex (CSC). The CSC is believed to be the core functional component of retromer or respective retromer complex variants acting to prevent missorting of selected transmembrane cargo proteins into the lysosomal degradation pathway. The recruitment of the CSC to the endosomal membrane involves RAB7A and SNX3. The SNX-BAR retromer mediates retrograde transport of cargo proteins from endosomes to the trans-Golgi network (TGN) and is involved in endosome-to-plasma membrane transport for cargo protein recycling. The SNX3-retromer mediates the retrograde transport of WLS distinct from the SNX-BAR retromer pathway. The SNX27-retromer is believed to be involved in endosome-to-plasma membrane trafficking and recycling of a broad spectrum of cargo proteins. The CSC seems to act as recruitment hub for other proteins, such as the WASH complex and TBC1D5. May be involved in retrograde transport of SORT1 but not of IGF2R. Acts redundantly with VSP26A in SNX-27 mediated endocytic recycling of SLC2A1/GLUT1. In Mus musculus (Mouse), this protein is Vacuolar protein sorting-associated protein 26B (Vps26b).